The sequence spans 185 residues: Elongation factor P (185 aa).

This sequence belongs to the elongation factor P family.

It is found in the cytoplasm. It participates in protein biosynthesis; polypeptide chain elongation. In terms of biological role, involved in peptide bond synthesis. Stimulates efficient translation and peptide-bond synthesis on native or reconstituted 70S ribosomes in vitro. Probably functions indirectly by altering the affinity of the ribosome for aminoacyl-tRNA, thus increasing their reactivity as acceptors for peptidyl transferase. This Clostridioides difficile (strain 630) (Peptoclostridium difficile) protein is Elongation factor P.